The chain runs to 117 residues: UPF0251 protein cbdbA217 (117 aa).

The protein belongs to the UPF0251 family.

This chain is UPF0251 protein cbdbA217, found in Dehalococcoides mccartyi (strain CBDB1).